The sequence spans 195 residues: Protein LIGHT-DEPENDENT SHORT HYPOCOTYLS 4 (195 aa).

Positions T28–S38 are enriched in low complexity. Disordered regions lie at residues T28 to N51 and S162 to N195. The ALOG domain maps to R48–K175. The Nuclear localization signal signature appears at K173–K177.

This sequence belongs to the plant homeotic and developmental regulators ALOG protein family. In terms of tissue distribution, induced by NAC054/CUC1 and NAC098/CUC2 in shoot organ boundary cells.

Its subcellular location is the nucleus. Its function is as follows. Probable transcription regulator that acts as a developmental regulator by promoting cell growth in response to light. May suppress organ differentiation in the boundary region. The protein is Protein LIGHT-DEPENDENT SHORT HYPOCOTYLS 4 (LSH4) of Arabidopsis thaliana (Mouse-ear cress).